We begin with the raw amino-acid sequence, 424 residues long: MAIPFMETVVGFMIVMYIFETYLDLRQLTALKLPTLPKTLVGVISQEKFEKSRAYSLDKSYFHFVHEFVTILMDSAILFFGILPWFWKMSGAVLPRLGLDPENEILHTLSFLAGVMTWSQITDLPFSLYSTFVIESRHGFNKQTIWMFIRDMIKGTFLSVILGPPIVAAIIFIVQKGGPYLAIYLWAFMFILSLVMMTIYPVLIAPLFNKFTPLPDGDLREKIEKLASSLKFPLKKLFVVDGSTRSSHSNAYMYGFFKNKRIVLYDTLIQQCKNEDEIVAVIAHELGHWKLNHTTYSFIAVQILAFLQFGGYTLVRNSTDLFRSFGFDTQPVLIGLIIFQHTVIPLQHLVSFGLNLVSRAFEFQADAFAVKLGYAKDLRPALVKLQEENLSAMNTDPLYSAYHYSHPPLVERLRAIDGEDKKTD.

A run of 5 helical transmembrane segments spans residues 3–23 (IPFMETVVGFMIVMYIFETYL), 67–87 (EFVTILMDSAILFFGILPWFW), 109–129 (LSFLAGVMTWSQITDLPFSLY), 155–175 (GTFLSVILGPPIVAAIIFIVQ), and 185–205 (LWAFMFILSLVMMTIYPVLIA). Residue histidine 284 coordinates Zn(2+). Glutamate 285 is an active-site residue. Residue histidine 288 participates in Zn(2+) binding. Transmembrane regions (helical) follow at residues 295 to 315 (TYSFIAVQILAFLQFGGYTLV) and 332 to 352 (VLIGLIIFQHTVIPLQHLVSF). Residue glutamate 362 coordinates Zn(2+). Catalysis depends on aspartate 366, which acts as the Proton donor.

It belongs to the peptidase M48A family. Requires Zn(2+) as cofactor. In terms of tissue distribution, expressed in leaves, stems and flowers.

The protein localises to the endoplasmic reticulum membrane. The enzyme catalyses Hydrolyzes the peptide bond -P2-(S-farnesyl or geranylgeranyl)C-P1'-P2'-P3'-COOH where P1' and P2' are amino acids with aliphatic side chains and P3' is any C-terminal residue.. Functionally, proteolytically removes the C-terminal three residues of farnesylated proteins. The substrate specificity is only partially overlapping with that of FACE2. This is CAAX prenyl protease 1 homolog (FACE1) from Arabidopsis thaliana (Mouse-ear cress).